The following is a 216-amino-acid chain: Superoxide dismutase [Mn], mitochondrial (216 aa).

The transit peptide at 1–18 (MSFLNRNLSRTIKAAVRG) directs the protein to the mitochondrion. Positions 44, 92, 176, and 180 each coordinate Mn(2+).

It belongs to the iron/manganese superoxide dismutase family. The cofactor is Mn(2+).

The protein localises to the mitochondrion matrix. The enzyme catalyses 2 superoxide + 2 H(+) = H2O2 + O2. Its function is as follows. Destroys superoxide anion radicals which are normally produced within the cells and which are toxic to biological systems. This chain is Superoxide dismutase [Mn], mitochondrial (Sod2), found in Glossina morsitans morsitans (Savannah tsetse fly).